We begin with the raw amino-acid sequence, 133 residues long: Small ribosomal subunit protein bS6 (133 aa).

The protein belongs to the bacterial ribosomal protein bS6 family.

In terms of biological role, binds together with bS18 to 16S ribosomal RNA. The chain is Small ribosomal subunit protein bS6 from Chlorobium phaeovibrioides (strain DSM 265 / 1930) (Prosthecochloris vibrioformis (strain DSM 265)).